Here is a 101-residue protein sequence, read N- to C-terminus: MRKFETLLLLSPELGSQPREDLLAVLTGVIEREQGSVLAVDHWGMRDLAYPVRKHMRGYYVRLEYAVAGPSVAELERIIRITDGIYKFVTVKLADEAEEAA.

Belongs to the bacterial ribosomal protein bS6 family.

Its function is as follows. Binds together with bS18 to 16S ribosomal RNA. This chain is Small ribosomal subunit protein bS6, found in Oleidesulfovibrio alaskensis (strain ATCC BAA-1058 / DSM 17464 / G20) (Desulfovibrio alaskensis).